We begin with the raw amino-acid sequence, 333 residues long: Glycerol-3-phosphate dehydrogenase [NAD(P)+] (333 aa).

NADPH is bound by residues tryptophan 11, arginine 34, and lysine 107. Lysine 107, glycine 136, and serine 138 together coordinate sn-glycerol 3-phosphate. Position 140 (alanine 140) interacts with NADPH. Lysine 191, aspartate 244, serine 254, arginine 255, and asparagine 256 together coordinate sn-glycerol 3-phosphate. The active-site Proton acceptor is the lysine 191. Arginine 255 contributes to the NADPH binding site. NADPH is bound by residues isoleucine 279 and glutamate 281.

Belongs to the NAD-dependent glycerol-3-phosphate dehydrogenase family.

It localises to the cytoplasm. The catalysed reaction is sn-glycerol 3-phosphate + NAD(+) = dihydroxyacetone phosphate + NADH + H(+). It carries out the reaction sn-glycerol 3-phosphate + NADP(+) = dihydroxyacetone phosphate + NADPH + H(+). Its pathway is membrane lipid metabolism; glycerophospholipid metabolism. Functionally, catalyzes the reduction of the glycolytic intermediate dihydroxyacetone phosphate (DHAP) to sn-glycerol 3-phosphate (G3P), the key precursor for phospholipid synthesis. The protein is Glycerol-3-phosphate dehydrogenase [NAD(P)+] of Nitrosospira multiformis (strain ATCC 25196 / NCIMB 11849 / C 71).